The sequence spans 344 residues: N-acetyl-gamma-glutamyl-phosphate reductase (344 aa).

The active site involves Cys-150.

The protein belongs to the NAGSA dehydrogenase family. Type 1 subfamily.

It localises to the cytoplasm. The catalysed reaction is N-acetyl-L-glutamate 5-semialdehyde + phosphate + NADP(+) = N-acetyl-L-glutamyl 5-phosphate + NADPH + H(+). It functions in the pathway amino-acid biosynthesis; L-arginine biosynthesis; N(2)-acetyl-L-ornithine from L-glutamate: step 3/4. Functionally, catalyzes the NADPH-dependent reduction of N-acetyl-5-glutamyl phosphate to yield N-acetyl-L-glutamate 5-semialdehyde. This Ectopseudomonas mendocina (strain ymp) (Pseudomonas mendocina) protein is N-acetyl-gamma-glutamyl-phosphate reductase.